We begin with the raw amino-acid sequence, 88 residues long: Cell division topological specificity factor (88 aa).

The protein belongs to the MinE family.

In terms of biological role, prevents the cell division inhibition by proteins MinC and MinD at internal division sites while permitting inhibition at polar sites. This ensures cell division at the proper site by restricting the formation of a division septum at the midpoint of the long axis of the cell. In Pseudoalteromonas translucida (strain TAC 125), this protein is Cell division topological specificity factor.